Here is a 313-residue protein sequence, read N- to C-terminus: Aspartate carbamoyltransferase catalytic subunit (313 aa).

2 residues coordinate carbamoyl phosphate: arginine 58 and threonine 59. Lysine 86 provides a ligand contact to L-aspartate. Residues arginine 108, histidine 136, and glutamine 139 each coordinate carbamoyl phosphate. Arginine 169 and arginine 223 together coordinate L-aspartate. 2 residues coordinate carbamoyl phosphate: glycine 264 and proline 265.

Belongs to the aspartate/ornithine carbamoyltransferase superfamily. ATCase family. As to quaternary structure, heterododecamer (2C3:3R2) of six catalytic PyrB chains organized as two trimers (C3), and six regulatory PyrI chains organized as three dimers (R2).

The catalysed reaction is carbamoyl phosphate + L-aspartate = N-carbamoyl-L-aspartate + phosphate + H(+). It functions in the pathway pyrimidine metabolism; UMP biosynthesis via de novo pathway; (S)-dihydroorotate from bicarbonate: step 2/3. Functionally, catalyzes the condensation of carbamoyl phosphate and aspartate to form carbamoyl aspartate and inorganic phosphate, the committed step in the de novo pyrimidine nucleotide biosynthesis pathway. This Ruminiclostridium cellulolyticum (strain ATCC 35319 / DSM 5812 / JCM 6584 / H10) (Clostridium cellulolyticum) protein is Aspartate carbamoyltransferase catalytic subunit.